A 483-amino-acid polypeptide reads, in one-letter code: Succinate semialdehyde dehydrogenase (483 aa).

Residues 156–157 (WN), 180–183 (KPAP), and 233–234 (GS) contribute to the NAD(+) site. The Proton acceptor role is filled by E255. L256 serves as a coordination point for NAD(+). C289 acts as the Nucleophile in catalysis. E386 contributes to the NAD(+) binding site.

It belongs to the aldehyde dehydrogenase family. As to quaternary structure, homotetramer.

The enzyme catalyses succinate semialdehyde + NAD(+) + H2O = succinate + NADH + 2 H(+). Its function is as follows. Involved in the degradation of the pyridine ring of trigonelline (TG; N-methylnicotinate) into succinate and methylamine as carbon and nitrogen sources, respectively. Catalyzes the NAD(+)-dependent oxidation of succinate semialdehyde to succinate. This is Succinate semialdehyde dehydrogenase from Acinetobacter baylyi (strain ATCC 33305 / BD413 / ADP1).